The sequence spans 445 residues: Sodium/proton-dependent alanine carrier protein (445 aa).

The next 9 membrane-spanning stretches (helical) occupy residues 41–61 (IAYGGPGAVFWMWVITFIGAA), 103–123 (AAIILSMAVLMPGIQANSIAD), 129–149 (FGIPKLVTGIFVIAVLGFTIF), 159–179 (AEIVVPFMAVGYLFVAIAIIA), 188–208 (VFGLIFKSAFGADQVFGGILG), 249–269 (AFSIYLDVFLVVTATALMILF), 304–324 (TLFPGFGSAFIAIALFFFAFT), 349–369 (AFFALKLVFLAATFYGTVKTA), and 375–395 (MGDIGLGIMVWLNLIAILLLF).

It belongs to the alanine or glycine:cation symporter (AGCS) (TC 2.A.25) family. The N-terminus is blocked.

The protein resides in the cell membrane. Mediates the active transport of alanine, driven by either an H(+) or Na(+) gradient. The sequence is that of Sodium/proton-dependent alanine carrier protein from Bacillus sp. (strain PS3).